The following is a 118-amino-acid chain: Fluoride-specific ion channel FluC 1 (118 aa).

The next 2 membrane-spanning stretches (helical) occupy residues 1–21 (MIQC…RGFV) and 29–49 (FNTS…FCIG). Positions 71 and 74 each coordinate Na(+). Residues 95–115 (LFILYSILQYGVSFVACLLGY) form a helical membrane-spanning segment.

The protein belongs to the fluoride channel Fluc/FEX (TC 1.A.43) family.

The protein resides in the cell membrane. The catalysed reaction is fluoride(in) = fluoride(out). Na(+) is not transported, but it plays an essential structural role and its presence is essential for fluoride channel function. Functionally, fluoride-specific ion channel. Important for reducing fluoride concentration in the cell, thus reducing its toxicity. In Staphylococcus saprophyticus subsp. saprophyticus (strain ATCC 15305 / DSM 20229 / NCIMB 8711 / NCTC 7292 / S-41), this protein is Fluoride-specific ion channel FluC 1.